The chain runs to 470 residues: Minor capsid protein L2 (470 aa).

Residues 1–12 (MAKARAPRRKRA) carry the Nuclear localization signal motif. Cys21 and Cys27 are disulfide-bonded. Positions 451–459 (YVRKRRKRF) match the Nuclear localization signal motif.

This sequence belongs to the papillomaviridae L2 protein family. As to quaternary structure, interacts with major capsid protein L1. Interacts with E2; this interaction inhibits E2 transcriptional activity but not the DNA replication function E2. Interacts with host GADD45GIP1. Interacts with host HSPA8; this interaction is required for L2 nuclear translocation. Interacts with host importins KPNB2 and KPNB3. Forms a complex with importin alpha2-beta1 heterodimers via interaction with the importin alpha2 adapter. Interacts with host DYNLT1; this interaction is essential for virus intracellular transport during entry. Interacts (via C-terminus) with host retromer subunits VPS35 and VPS29. In terms of processing, highly phosphorylated.

Its subcellular location is the virion. It localises to the host nucleus. The protein localises to the host early endosome. The protein resides in the host Golgi apparatus. Functionally, minor protein of the capsid that localizes along the inner surface of the virion, within the central cavities beneath the L1 pentamers. Plays a role in capsid stabilization through interaction with the major capsid protein L1. Once the virion enters the host cell, L2 escorts the genomic DNA into the nucleus by promoting escape from the endosomal compartments and traffic through the host Golgi network. Mechanistically, the C-terminus of L2 possesses a cell-penetrating peptide that protudes from the host endosome, interacts with host cytoplasmic retromer cargo and thereby mediates the capsid delivery to the host trans-Golgi network. Plays a role through its interaction with host dynein in the intracellular microtubule-dependent transport of viral capsid toward the nucleus. Mediates the viral genome import into the nucleus through binding to host importins. Once within the nucleus, L2 localizes viral genomes to host PML bodies in order to activate early gene expression for establishment of infection. Later on, promotes late gene expression by interacting with the viral E2 protein and by inhibiting its transcriptional activation functions. During virion assembly, encapsidates the genome by direct interaction with the viral DNA. In Human papillomavirus type 54, this protein is Minor capsid protein L2.